Here is a 184-residue protein sequence, read N- to C-terminus: Fe/S biogenesis protein NfuA (184 aa).

2 residues coordinate [4Fe-4S] cluster: Cys142 and Cys145.

Belongs to the NfuA family. As to quaternary structure, homodimer. Requires [4Fe-4S] cluster as cofactor.

Its function is as follows. Involved in iron-sulfur cluster biogenesis. Binds a 4Fe-4S cluster, can transfer this cluster to apoproteins, and thereby intervenes in the maturation of Fe/S proteins. Could also act as a scaffold/chaperone for damaged Fe/S proteins. This is Fe/S biogenesis protein NfuA from Wigglesworthia glossinidia brevipalpis.